A 1706-amino-acid chain; its full sequence is 5'-3' exoribonuclease 1 (1706 aa).

Ser-1348 carries the phosphoserine modification. The interval 1619 to 1706 (ENKEAQSSQA…VNFGVSKPSE (88 aa)) is disordered. The span at 1623-1642 (AQSSQATPVQTSQPDSSNIV) shows a compositional bias: polar residues. Residue Ser-1645 is modified to Phosphoserine. Low complexity predominate over residues 1647–1657 (RESSSASLKSS). Residues 1658 to 1676 (PIAQPASSFQVETASQGHS) show a composition bias toward polar residues. Basic residues predominate over residues 1677 to 1694 (ISHHKSTPISSSRRKSRK).

This sequence belongs to the 5'-3' exonuclease family. In terms of assembly, found in a mRNP complex with UPF1, UPF2, UPF3B and XRN1. Associates with alpha and beta tubulins. Interacts with DIS3L2. Interacts with ZC3HAV1 in an RNA-dependent manner. Interacts with ZFP36L1. Interacts with TRIM71 (via NHL repeats) in an RNA-dependent manner. Interacts with YTHDC2 (via ANK repeats). Interacts with DHX34; the interaction is RNA-independent. In terms of tissue distribution, expressed in heart, brain, pancreas, spleen, testis, osteogenic sarcoma (OGS) biopsy and primary cell lines.

Its subcellular location is the cytoplasm. In terms of biological role, major 5'-3' exoribonuclease involved in mRNA decay. Required for the 5'-3'-processing of the G4 tetraplex-containing DNA and RNA substrates. The kinetic of hydrolysis is faster for G4 RNA tetraplex than for G4 DNA tetraplex and monomeric RNA tetraplex. Binds to RNA and DNA. Plays a role in replication-dependent histone mRNA degradation. May act as a tumor suppressor protein in osteogenic sarcoma (OGS). The polypeptide is 5'-3' exoribonuclease 1 (Homo sapiens (Human)).